The following is a 194-amino-acid chain: Inner membrane-spanning protein YciB (194 aa).

A run of 5 helical transmembrane segments spans residues 1–21 (MKLL…KTTN), 49–69 (EKMH…TILF), 77–97 (WKPS…GWVS), 120–140 (LNYS…YVAY), and 150–170 (FKLF…GVYI).

This sequence belongs to the YciB family.

It localises to the cell inner membrane. Functionally, plays a role in cell envelope biogenesis, maintenance of cell envelope integrity and membrane homeostasis. The protein is Inner membrane-spanning protein YciB of Hahella chejuensis (strain KCTC 2396).